We begin with the raw amino-acid sequence, 219 residues long: Holliday junction branch migration complex subunit RuvA (219 aa).

The tract at residues 1-67 (MIGWLRGERI…DDGSSLFGFP (67 aa)) is domain I. A domain II region spans residues 68–146 (DRRERDLFRV…AWSAEKNSDH (79 aa)). Positions 147–161 (SDLSLVDRSDLKSLP) are flexible linker. The tract at residues 162–219 (IEPDPLQDLQLTLSTLGYEDLEIRRAMRAVATGEEVPAANDGDGWLRASLRWLNRPSA) is domain III.

Belongs to the RuvA family. As to quaternary structure, homotetramer. Forms an RuvA(8)-RuvB(12)-Holliday junction (HJ) complex. HJ DNA is sandwiched between 2 RuvA tetramers; dsDNA enters through RuvA and exits via RuvB. An RuvB hexamer assembles on each DNA strand where it exits the tetramer. Each RuvB hexamer is contacted by two RuvA subunits (via domain III) on 2 adjacent RuvB subunits; this complex drives branch migration. In the full resolvosome a probable DNA-RuvA(4)-RuvB(12)-RuvC(2) complex forms which resolves the HJ.

The protein localises to the cytoplasm. In terms of biological role, the RuvA-RuvB-RuvC complex processes Holliday junction (HJ) DNA during genetic recombination and DNA repair, while the RuvA-RuvB complex plays an important role in the rescue of blocked DNA replication forks via replication fork reversal (RFR). RuvA specifically binds to HJ cruciform DNA, conferring on it an open structure. The RuvB hexamer acts as an ATP-dependent pump, pulling dsDNA into and through the RuvAB complex. HJ branch migration allows RuvC to scan DNA until it finds its consensus sequence, where it cleaves and resolves the cruciform DNA. The sequence is that of Holliday junction branch migration complex subunit RuvA from Synechococcus sp. (strain CC9311).